A 555-amino-acid polypeptide reads, in one-letter code: MSDIEIARAASKLAITQIGERLGISPGDLQPYGHDKAKISASFLHSLEDRKDGKLILVTAINPTPAGEGKTTTTVGLVDGLNRIGAKAMVCVREPSLGPCFGVKGGAAGGGRAQVVPMEDINLHFTGDFHAITSAHNLLAAMIDNHIYWGNEQDLDTRRIAWRRVVDMNDRALREMVGALGGVRNGFPRETGFDITVASEVMAILCLARDLADLEERLGQIVIGYRRDKTPVHARDIKAHQAMTVLLKEAMQPNLVQTLENNPALVHGGPFANIAHGCNSVVATRAALKLADYVVTEAGFGADLGAEKFFDIKCRKAGLRPAAAVIVATVRALKMNGGVAKTELGHEDVAALVRGAVNLGRHVENVRGFGVPVIVAINHFLSDTPAEIAALQDYAASIGVEAVLCRHWAEGGAGIEELARKVAAMADSGIADFQPLYPDDMPLFAKIETVAKRIYRAGSVTADRAVIDQLSQFEAMGYGDLPVCIAKTQYSFSTDPSLLGAPDGHEVHVRDVRLSAGAGFVVAITGDIMTMPGLPRKPAAETIRLDDDGLVEGLF.

64–71 (TPAGEGKT) contributes to the ATP binding site.

The protein belongs to the formate--tetrahydrofolate ligase family.

It catalyses the reaction (6S)-5,6,7,8-tetrahydrofolate + formate + ATP = (6R)-10-formyltetrahydrofolate + ADP + phosphate. Its pathway is one-carbon metabolism; tetrahydrofolate interconversion. In Allorhizobium ampelinum (strain ATCC BAA-846 / DSM 112012 / S4) (Agrobacterium vitis (strain S4)), this protein is Formate--tetrahydrofolate ligase.